Here is a 142-residue protein sequence, read N- to C-terminus: Putative pre-16S rRNA nuclease (142 aa).

Belongs to the YqgF nuclease family.

It localises to the cytoplasm. Functionally, could be a nuclease involved in processing of the 5'-end of pre-16S rRNA. This is Putative pre-16S rRNA nuclease from Blochmanniella floridana.